A 287-amino-acid polypeptide reads, in one-letter code: Pyridoxal kinase PdxY (287 aa).

Substrate contacts are provided by residues S10 and 45–46 (TQ). Residues D112, A144, E149, K182, and 209–212 (RPLV) each bind ATP. D224 provides a ligand contact to substrate.

The protein belongs to the pyridoxine kinase family. PdxY subfamily. Homodimer. Mg(2+) serves as cofactor.

It catalyses the reaction pyridoxal + ATP = pyridoxal 5'-phosphate + ADP + H(+). The protein operates within cofactor metabolism; pyridoxal 5'-phosphate salvage; pyridoxal 5'-phosphate from pyridoxal: step 1/1. Pyridoxal kinase involved in the salvage pathway of pyridoxal 5'-phosphate (PLP). Catalyzes the phosphorylation of pyridoxal to PLP. This Shigella dysenteriae serotype 1 (strain Sd197) protein is Pyridoxal kinase PdxY.